Here is a 556-residue protein sequence, read N- to C-terminus: Genetic interactor of prohibitins 3, mitochondrial (556 aa).

The transit peptide at 1 to 21 (MLNLCHALRGVRQFSCSVIVK) directs the protein to the mitochondrion. Residues 113–305 (ESTLNDILNY…LFDLPGYSTS (193 aa)) enclose the CP-type G domain.

It belongs to the TRAFAC class YlqF/YawG GTPase family. GEP3 subfamily.

Its subcellular location is the mitochondrion. Its function is as follows. Interacts genetically with prohibitins and thus may be involved in the mitochondrial lipid metabolism. This is Genetic interactor of prohibitins 3, mitochondrial (GEP3) from Saccharomyces cerevisiae (strain Zymaflore VL3) (Baker's yeast).